The sequence spans 556 residues: Outer spore wall assembly protein SHE10 (556 aa).

The first 21 residues, 1–21 (MRFLTKFLLFLATVYFGLKYA), serve as a signal peptide directing secretion. Residues 135–201 (NKNLKRHVER…KQITSDVKKT (67 aa)) adopt a coiled-coil conformation. Residues 190-208 (EAKQITSDVKKTVESEIKK) show a composition bias toward basic and acidic residues. Disordered stretches follow at residues 190–263 (EAKQ…EDIT) and 534–556 (RKEA…PISA). The span at 220 to 244 (IVSTSTIVKTITRTRHSSSSTTSTK) shows a compositional bias: low complexity. Residues 245 to 256 (SAEETSEKNLET) show a composition bias toward basic and acidic residues. The stretch at 481–547 (KISEFKLLLD…GEVNESSEEE (67 aa)) forms a coiled coil.

It belongs to the SHE10 family. As to quaternary structure, component of the mitochondria-localized RNase mitochondrial RNA-processing (RNase MRP) composed of one single RNA encoded by the NME1 gene and at least 31 proteins. Absent in the nucleus-localized RNase MRP (NuMRP).

The protein resides in the mitochondrion. Functionally, involved in spore wall assembly. May be a component of the mitochondrial RNase MRP (MtMRP), a ribonucleoprotein endoribonuclease involved in the cleaving RNA transcripts to generate primers for DNA replication in mitochondria. This Candida glabrata (strain ATCC 2001 / BCRC 20586 / JCM 3761 / NBRC 0622 / NRRL Y-65 / CBS 138) (Yeast) protein is Outer spore wall assembly protein SHE10.